The following is a 377-amino-acid chain: Nitric oxide reductase FlRd-NAD(+) reductase (377 aa).

This sequence belongs to the FAD-dependent oxidoreductase family. Requires FAD as cofactor.

Its subcellular location is the cytoplasm. It catalyses the reaction 2 reduced [nitric oxide reductase rubredoxin domain] + NAD(+) + H(+) = 2 oxidized [nitric oxide reductase rubredoxin domain] + NADH. Its pathway is nitrogen metabolism; nitric oxide reduction. Functionally, one of at least two accessory proteins for anaerobic nitric oxide (NO) reductase. Reduces the rubredoxin moiety of NO reductase. The chain is Nitric oxide reductase FlRd-NAD(+) reductase from Escherichia coli O6:K15:H31 (strain 536 / UPEC).